The primary structure comprises 330 residues: uncharacterized protein (330 aa).

An ABC transporter domain is found at 4 to 242 (LTISDLVVEY…AGEVLFEQST (239 aa)). Position 40-47 (40-47 (GPSGCGKT)) interacts with ATP. Position 210–330 (210–330 (DRVLELMPAQ…LIEHRELASE (121 aa))) interacts with a nucleoside 3',5'-cyclic phosphate.

The protein belongs to the ABC transporter superfamily.

This is an uncharacterized protein from Mycobacterium bovis (strain ATCC BAA-935 / AF2122/97).